A 123-amino-acid polypeptide reads, in one-letter code: Putative iron-sulfur cluster insertion protein ErpA (123 aa).

Cys-51, Cys-115, and Cys-117 together coordinate iron-sulfur cluster.

It belongs to the HesB/IscA family. As to quaternary structure, homodimer. Requires iron-sulfur cluster as cofactor.

Its function is as follows. Required for insertion of 4Fe-4S clusters. This chain is Putative iron-sulfur cluster insertion protein ErpA, found in Burkholderia cenocepacia (strain HI2424).